Reading from the N-terminus, the 187-residue chain is uncharacterized protein (187 aa).

The stretch at 127–172 forms a coiled coil; it reads KQPQVTLTQLQEELDEAKTRLALKEKELLEALSEISKLRLQLSNQL.

This is an uncharacterized protein from Tomato torrado virus (isolate Solanum lycopersicum/Spain/PRIToTV0301/-) (ToTV).